Reading from the N-terminus, the 936-residue chain is VPS35 endosomal protein-sorting factor-like (936 aa).

Disordered stretches follow at residues 43–69 (SKTK…VDPL) and 87–113 (DPAA…VGPD). Residues 51-69 (KGSTSSTSSSSSSSVVDPL) show a composition bias toward low complexity. Phosphoserine is present on Ser-265. Residues 672-692 (AFVRACVAYCFITIPSLVGIF) form a helical membrane-spanning segment.

The protein belongs to the VPS35L family. In terms of assembly, component of the heterotrimeric retriever complex formed by VPS26C, VPS29 and VPS35L. Interacts with VPS29. Interacts with COMMD1, CCDC93 and CCDC22; associates with the CCC (COMMD/CCDC22/CCDC93) complex which contains at least COMMD1 (and possibly other COMM domain-containing proteins), CCDC22 and CCDC93. Interacts with WASHC1, WASHC2A and WASHC2C. Interacts with SNX17 and SNX31.

The protein localises to the membrane. It localises to the endosome. Functionally, acts as a component of the retriever complex. The retriever complex is a heterotrimeric complex related to retromer cargo-selective complex (CSC) and essential for retromer-independent retrieval and recycling of numerous cargos such as integrin alpha-5/beta-1 (ITGA5:ITGB1). The recruitment of the retriever complex to the endosomal membrane involves CCC and WASH complexes. In the endosomes, drives the retrieval and recycling of NxxY-motif-containing cargo proteins by coupling to SNX17, a cargo essential for the homeostatic maintenance of numerous cell surface proteins associated with processes that include cell migration, cell adhesion, nutrient supply and cell signaling. Involved in copper-dependent ATP7A trafficking between the trans-Golgi network and vesicles in the cell periphery; the function is proposed to depend on its association with the CCC complex and cooperation with the WASH complex on early endosomes. Seems not to be required for CCC complex stability. The polypeptide is VPS35 endosomal protein-sorting factor-like (Rattus norvegicus (Rat)).